The primary structure comprises 1736 residues: MERCSRCHRLLLFLPLVLGLSAAPGWAGAPSVDVLRALRFPSLPDGVRRSKGVCPGDVAYRVARPAQLSAPTRQLFPGGFPKDFSLLTVVRTRPGLQAPLLTLYSAQGVQQLGLELGRPVRFLYEDQRGRPQASAQPIFRGLSLADGKWHHVAVAVKGQSVTLIVDCKKRVTRPLPRSVHPVLDTHGVVIFGAHILDDEVFEGDVQELLVVPGVQAAYQSCGQKDLECEREQRDGPQTQKPHRAQRSPKKEPARLHKPQSQEPQKQPTESLYYDYEPPYYDVMTTGTAPDYQYPTPGEEEGVLESSPLPFLEEEQTDLQVSPTADSFQAEEYGEGGTDSPAGFYDYTYGYGDDYREETELGPALSAETAHSGAVAHGPRGLKGEKGEPAVLEPGMFVEGPPGPEGPAGLAGPPGIQGNPGPVGDPGERGPPGRAGLPGSDGPPGPPGTSLMLPFRFGSSGGDKGPVVAAQEAQAQAILQQARLALRGPPGPMGYTGRPGPLGQPGSPGLKGESGDLGPQGPRGPQGLTGPPGKAGRRGRAGADGARGMPGEPGMKGDRGFDGLPGLPGEKGQRGDTGAQGLPGPPGEDGERGDDGEIGPRGLPGESGPRGLLGPKGPPGIPGPPGVRGMDGPHGPKGSLGPQGEPGPPGQQGTPGAQGLPGPQGAIGPHGEKGARGKPGLPGMPGSDGLPGHPGKEGPPGTKGNQGPSGPQGPLGYPGPRGVKGVDGIRGLKGHKGEKGEDGFPGFKGDIGVKGDRGEVGVPGSRGEDGPEGPKGRTGPTGDPGPTGLMGEKGKLGVPGLPGYPGRQGPKGSLGFPGFPGASGEKGARGLSGKSGPRGERGPTGPRGQRGPRGATGKSGAKGTSGGDGPHGPPGERGLPGPQGPNGFPGPKGPPGPAGKDGLPGHPGQRGEVGFQGKTGPPGPPGVVGPQGTAGESGPMGERGHSGPPGPPGEQGLPGTSGKEGTKGDPGPPGAPGKDGPAGLRGFPGERGLPGTAGGPGLKGNEGPAGPPGPAGSPGERGAAGSGGPIGPPGRPGPQGPPGAAGEKGVPGEKGPIGPTGRDGVQGPVGLPGPAGPPGVAGEDGDKGEVGDPGQKGTKGNKGEHGPPGPPGPIGPVGQPGAAGADGEPGARGPQGHFGAKGDEGTRGFNGPPGPIGLQGLPGPSGEKGETGDGGPMGPPGPPGPRGPAGPNGADGPQGSPGGVGNLGPPGEKGEPGESGSPGVQGEPGVKGPRGERGEKGESGQAGEAGPPGPKGPTGDNGPKGNPGPVGFPGDPGPPGEAGPRGQDGAKGDRGEDGEPGQPGSPGPTGENGPPGPLGKRGPAGTPGPEGRQGEKGAKGDPGAVGAPGKTGPVGPAGLAGKPGPDGLRGLPGSVGQQGRPGATGQAGPPGPVGPPGLPGLRGDAGAKGEKGHPGLIGLIGPTGEQGEKGDRGLPGPQGSPGQKGETGIPGASGPIGPGGPPGLPGPSGPKGAKGATGPAGPKGEKGVQGPPGHPGPPGEVIQPLPIQMPKKTRRSVDGSKLIQDEEAVPTGGAPGSPAGLEEIFGSLDSLREEIEQMRRPAGTQDSPARTCQDLKLCHPELPDGEYWVDPNQGCARDAFRVFCNFTAGGETCVTPRDDVTQFSYVDSEGSPVGVVQLTFLRLLSVSAHQDVSYPCSGVSQDGPLKLRGANEDELSPETSPYVKEFRDGCQTQQGRTVLEVRTPVLEQLPVLDASFADLGAPTRRGGVLLGPVCFMG.

Positions 1–27 are cleaved as a signal peptide; the sequence is MERCSRCHRLLLFLPLVLGLSAAPGWA. In terms of domain architecture, Laminin G-like spans 57-228; the sequence is DVAYRVARPA…QSCGQKDLEC (172 aa). The segment at 215–486 is nonhelical region; the sequence is QAAYQSCGQK…ILQQARLALR (272 aa). Disordered regions lie at residues 228-270, 364-465, and 485-1538; these read CERE…PTES, LSAE…DKGP, and LRGP…GSPA. Over residues 258–269 the composition is skewed to polar residues; it reads PQSQEPQKQPTE. Collagen-like domains follow at residues 399-447, 487-545, and 546-583; these read GPPG…GPPG, GPPG…ADGA, and RGMPGEPGMKGDRGFDGLPGLPGEKGQRGDTGAQGLPG. Residues 487–1500 are triple-helical region; the sequence is GPPGPMGYTG…PGHPGPPGEV (1014 aa). Over residues 497–533 the composition is skewed to low complexity; the sequence is RPGPLGQPGSPGLKGESGDLGPQGPRGPQGLTGPPGK. The span at 615–624 shows a compositional bias: pro residues; it reads KGPPGIPGPP. A compositionally biased stretch (low complexity) spans 650-668; that stretch reads QQGTPGAQGLPGPQGAIGP. A Collagen-like 4 domain is found at 682–737; the sequence is GMPGSDGLPGHPGKEGPPGTKGNQGPSGPQGPLGYPGPRGVKGVDGIRGLKGHKGE. Positions 765–774 are enriched in basic and acidic residues; it reads RGEDGPEGPK. Low complexity-rich tracts occupy residues 776-789 and 842-861; these read RTGPTGDPGPTGLM and PTGPRGQRGPRGATGKSGAK. 5 Collagen-like domains span residues 868–924, 967–1025, 1026–1055, 1056–1086, and 1114–1172; these read GPHG…PGPP, GDPG…AAGS, GGPIGPPGRPGPQGPPGAAGEKGVPGEKGP, IGPTGRDGVQGPVGLPGPAGPPGVAGEDGDK, and GPVG…ETGD. The span at 994–1003 shows a compositional bias: gly residues; sequence GTAGGPGLKG. The segment covering 1029 to 1040 has biased composition (pro residues); it reads IGPPGRPGPQGP. 2 stretches are compositionally biased toward low complexity: residues 1115 to 1133 and 1155 to 1164; these read PVGQPGAAGADGEPGARGP and IGLQGLPGPS. Residues 1176-1187 show a composition bias toward pro residues; the sequence is MGPPGPPGPRGP. Residues 1188 to 1197 are compositionally biased toward low complexity; sequence AGPNGADGPQ. Positions 1198–1207 are enriched in gly residues; the sequence is GSPGGVGNLG. The span at 1217–1230 shows a compositional bias: low complexity; that stretch reads ESGSPGVQGEPGVK. Basic and acidic residues predominate over residues 1232–1241; the sequence is PRGERGEKGE. A compositionally biased stretch (low complexity) spans 1256-1272; the sequence is PTGDNGPKGNPGPVGFP. The segment covering 1287–1296 has biased composition (basic and acidic residues); that stretch reads DGAKGDRGED. Residues 1376–1386 show a composition bias toward low complexity; it reads QQGRPGATGQA. Pro residues-rich tracts occupy residues 1388–1397 and 1457–1467; these read PPGPVGPPGL and PGGPPGLPGPS. Collagen-like domains lie at 1393–1447 and 1448–1499; these read GPPG…GETG and IPGA…PPGE. Residues 1469-1481 show a composition bias toward low complexity; that stretch reads PKGAKGATGPAGP. The propeptide at 1501-1736 is C-terminal propeptide; it reads IQPLPIQMPK…VLLGPVCFMG (236 aa). In terms of domain architecture, Fibrillar collagen NC1 spans 1541–1735; it reads EEIFGSLDSL…GVLLGPVCFM (195 aa). Cys1571 and Cys1603 are joined by a disulfide. 5 residues coordinate Ca(2+): Asp1589, Asn1591, Gln1592, Cys1594, and Asp1597. Asn1604 carries an N-linked (GlcNAc...) asparagine glycan. Disulfide bonds link Cys1612–Cys1733 and Cys1655–Cys1689.

Belongs to the fibrillar collagen family. Trimers composed of three different chains: alpha 1(XI), alpha 2(XI), and alpha 3(XI). Alpha 3(XI) is a post-translational modification of alpha 1(II). Alpha 1(V) can also be found instead of alpha 3(XI)=1(II). Prolines at the third position of the tripeptide repeating unit (G-X-Y) are hydroxylated in some or all of the chains.

The protein resides in the secreted. It is found in the extracellular space. It localises to the extracellular matrix. Its function is as follows. May play an important role in fibrillogenesis by controlling lateral growth of collagen II fibrils. The chain is Collagen alpha-2(XI) chain (Col11a2) from Mus musculus (Mouse).